Consider the following 267-residue polypeptide: Transcription factor HES-1 (267 aa).

The disordered stretch occupies residues 1 to 45; that stretch reads MPADLMEKNSSSPVAATPASMSNTPDKPKTASEHRKSSKPIMEKR. The span at 8-25 shows a compositional bias: polar residues; it reads KNSSSPVAATPASMSNTP. Residues 26–35 are compositionally biased toward basic and acidic residues; sequence DKPKTASEHR. One can recognise a bHLH domain in the interval 34–91; sequence HRKSSKPIMEKRRRARINESLGQLKTLILDALKKDSSRHSKLEKADILEMTVKHLRNL. An Orange domain is found at 110–143; that stretch reads YRAGFSECMNEVTRFLSTCEGVNTDVRTRLLGHL. Residues 264-267 carry the WRPW motif motif; sequence WRPW.

In terms of assembly, transcription repression requires formation of a complex with a corepressor protein of the Groucho/TLE family. Interacts with the bHLH protein hes2, and binds DNA in the form of a heterodimer with the bHLH protein hey1/hrt1. Interacts with the bHLH protein hes6; this interaction may inhibit the transcriptional repressor activity.

Its subcellular location is the nucleus. Transcriptional repressor of a subset of early mesodermal genes including myod1 and t/bra. Binds DNA on N-box motifs: 5'-CACNAG-3'. Acts as a negative regulator of myogenesis, mediating Notch signaling to repress expression of myod1. The polypeptide is Transcription factor HES-1 (Xenopus tropicalis (Western clawed frog)).